Reading from the N-terminus, the 255-residue chain is 5'-nucleotidase SurE (255 aa).

Positions 8, 9, 40, and 93 each coordinate a divalent metal cation.

Belongs to the SurE nucleotidase family. It depends on a divalent metal cation as a cofactor.

It is found in the cytoplasm. The catalysed reaction is a ribonucleoside 5'-phosphate + H2O = a ribonucleoside + phosphate. In terms of biological role, nucleotidase that shows phosphatase activity on nucleoside 5'-monophosphates. In Azorhizobium caulinodans (strain ATCC 43989 / DSM 5975 / JCM 20966 / LMG 6465 / NBRC 14845 / NCIMB 13405 / ORS 571), this protein is 5'-nucleotidase SurE.